The chain runs to 72 residues: Translation initiation factor IF-1 (72 aa).

The S1-like domain occupies Met-1–Lys-72.

The protein belongs to the IF-1 family. Component of the 30S ribosomal translation pre-initiation complex which assembles on the 30S ribosome in the order IF-2 and IF-3, IF-1 and N-formylmethionyl-tRNA(fMet); mRNA recruitment can occur at any time during PIC assembly.

The protein resides in the cytoplasm. Functionally, one of the essential components for the initiation of protein synthesis. Stabilizes the binding of IF-2 and IF-3 on the 30S subunit to which N-formylmethionyl-tRNA(fMet) subsequently binds. Helps modulate mRNA selection, yielding the 30S pre-initiation complex (PIC). Upon addition of the 50S ribosomal subunit IF-1, IF-2 and IF-3 are released leaving the mature 70S translation initiation complex. The chain is Translation initiation factor IF-1 from Bacteroides fragilis (strain ATCC 25285 / DSM 2151 / CCUG 4856 / JCM 11019 / LMG 10263 / NCTC 9343 / Onslow / VPI 2553 / EN-2).